A 387-amino-acid chain; its full sequence is Decapping nuclease RAI1 (387 aa).

Residue Glu-172 coordinates a divalent metal cation. A Phosphoserine modification is found at Ser-198. Residue Glu-221 coordinates substrate. A divalent metal cation is bound by residues Asp-223, Glu-241, and Leu-242. 2 residues coordinate substrate: Lys-243 and Gln-267. The interaction with RAT1 stretch occupies residues 273 to 387; it reads IPRIIYGFKD…GFKEWRKSLK (115 aa).

Belongs to the DXO/Dom3Z family. In terms of assembly, interacts with RAT1, RTT103 and pre-60S ribosomal subunits. Interacts with RAT1; the interaction is direct, stabilizes RAT1 protein structure and stimulates its exoribonuclease activity. The interaction also stimulates RAI1 pyrophosphohydrolase activity, probably by recruiting it to mRNA substrates. A divalent metal cation is required as a cofactor.

It is found in the nucleus. It catalyses the reaction a 5'-end NAD(+)-phospho-ribonucleoside in mRNA + H2O = a 5'-end phospho-ribonucleoside in mRNA + NAD(+) + H(+). The catalysed reaction is a 5'-end (N(7)-methyl 5'-triphosphoguanosine)-ribonucleoside-ribonucleotide in mRNA + H2O = a (N(7)-methyl 5'-triphosphoguanosine)-nucleoside + a 5'-end phospho-ribonucleoside in mRNA + H(+). It carries out the reaction a 5'-end triphospho-ribonucleoside in mRNA + H2O = a 5'-end phospho-ribonucleoside in mRNA + diphosphate + H(+). In terms of biological role, decapping enzyme for NAD-capped RNAs: specifically hydrolyzes the nicotinamide adenine dinucleotide (NAD) cap from a subset of RNAs by removing the entire NAD moiety from the 5'-end of an NAD-capped RNA. The NAD-cap is present at the 5'-end of some RNAs and snoRNAs. In contrast to the canonical 5'-end N7 methylguanosine (m7G) cap, the NAD cap promotes mRNA decay. Also acts as a non-canonical decapping enzyme that removes the entire cap structure of m7G capped or incompletely capped RNAs. Has decapping activity toward incomplete 5'-end m7G cap mRNAs such as unmethylated 5'-end-capped RNA (cap0), while it has no activity toward 2'-O-ribose methylated m7G cap (cap1). Also possesses RNA 5'-pyrophosphohydrolase activity by hydrolyzing the 5'-end triphosphate to release pyrophosphates. Stimulates exoribonuclease activity of RAT1, allowing it to degrade RNAs with stable secondary structure more effectively. Required for the processing of nuclear mRNA and rRNA precursors. May promote termination of transcription by RNA polymerase II. The protein is Decapping nuclease RAI1 of Saccharomyces cerevisiae (strain ATCC 204508 / S288c) (Baker's yeast).